Consider the following 255-residue polypeptide: MIKNAVSLVTGGASGLGRATAERLAKQGASVILADLPSSKGNEVAKELGDKVVFVPVDVTSEKDVSAALQTAKDKFGRLDLTVNCAGTATAVKTFNFNKNVAHRLEDFQRVININTVGTFNVIRLSAGLMGANEPNQDGQRGVIVNTASVAAFDGQIGQAAYSASKAAVVGMTLPIARDLSTQGIRICTIAPGLFNTPMLAALPEKVRTFLAKSIPFPQRLGEPSEYAHLVQAIYENPLLNGEVIRIDGALRMMP.

The NAD(+) site is built by S14, L16, D35, D58, V59, and C85. S149 lines the substrate pocket. NAD(+) is bound by residues Y162, K166, F195, and T197. Residue Y162 is the Proton acceptor of the active site.

The protein belongs to the short-chain dehydrogenases/reductases (SDR) family. As to quaternary structure, component of mitochondrial ribonuclease P, a complex composed of rswl/MRPP1, scu/MRPP2 and mldr/MRPP3. Found in many tissues including CNS, imaginal disks and salivary glands. Highest expression in both embryonic gonadal primordia and mature ovaries and testes.

It is found in the mitochondrion. It catalyses the reaction a (3S)-3-hydroxyacyl-CoA + NAD(+) = a 3-oxoacyl-CoA + NADH + H(+). It carries out the reaction (3S)-3-hydroxybutanoyl-CoA + NAD(+) = acetoacetyl-CoA + NADH + H(+). The catalysed reaction is testosterone + NAD(+) = androst-4-ene-3,17-dione + NADH + H(+). The enzyme catalyses 5alpha-androstane-3alpha,17beta-diol + NAD(+) = 17beta-hydroxy-5alpha-androstan-3-one + NADH + H(+). It catalyses the reaction 17beta-estradiol + NAD(+) = estrone + NADH + H(+). It carries out the reaction ursodeoxycholate + NAD(+) = 7-oxolithocholate + NADH + H(+). The catalysed reaction is 3beta,7beta-dihydroxy-5beta-cholan-24-oate + NAD(+) = 3beta-hydroxy-7-oxo-5beta-cholan-24-oate + NADH + H(+). The enzyme catalyses 11-dehydrocorticosterone + NAD(+) = pregn-4-ene-3,11,20,21-tetraone + NADH + H(+). It catalyses the reaction cortisone + NAD(+) = 17alpha-hydroxypregn-4-en-3,11,20-trione-21-al + NADH + H(+). It carries out the reaction cortisol + NAD(+) = 11beta,17alpha-dihydroxypregn-4-ene-3,20,21-trione + NADH + H(+). The catalysed reaction is 5alpha-pregnan-20beta-ol-3-one + NAD(+) = 5alpha-pregnane-3,20-dione + NADH + H(+). The enzyme catalyses 17beta-hydroxy-5alpha-androstan-3-one + NAD(+) = 5alpha-androstan-3,17-dione + NADH + H(+). Mitochondrial dehydrogenase involved in pathways of fatty acid, and steroid metabolism. Versatile enzyme presenting two types of activity; L-3-hydroxyacyl-CoA dehydrogenase ((3S)-3-hydroxyacyl-CoA dehydrogenase) activity and hydroxysteroid dehydrogenase (HSD) activity with a wide substrate spectrum. As a (3S)-3-hydroxyacyl-CoA dehydrogenase, it functions in the third step of the fatty acid beta-oxidation pathway, a major metabolic process in which fatty acids are oxidized to provide a significant source of energy, while also generating acyl-CoA metabolites used by many metabolic routes. As a HSD, it functions in the degradation pathways of glucocorticoids and sex steroids and epimerization of bile acids; catalyzes the beta-oxidation at position 17 of androgens and estrogens, has 3-alpha-hydroxysteroid dehydrogenase activity with androsterone, and carries out oxidative conversions of 7-beta-hydroxylated bile acids like ursodeoxycholate or isoursodeoxycholate (also known as 3-beta,7-beta-dihydroxy-5-beta-cholan-24-oate or 7-beta-hydroxyisolithocholate, respectively). Also exhibits 20-beta-OH and 21-OH dehydrogenase activities with C21 steroids. Essential for structural and functional integrity of mitochondria. Required for cell survival during embryonic development. May play a role in germline formation. Its function is as follows. In addition to mitochondrial dehydrogenase activity, moonlights as a component of mitochondrial ribonuclease P, a complex that cleaves tRNA molecules in their 5'-ends. Essential for the structural and functional integrity of mitochondria. Function is essential for pupal development. This is 3-hydroxyacyl-CoA dehydrogenase type-2 from Drosophila melanogaster (Fruit fly).